The chain runs to 183 residues: Oligoribonuclease (183 aa).

Residues 9–172 form the Exonuclease domain; sequence LIWIDLEMTG…DDIRDSISEL (164 aa). The active site involves Tyr130.

The protein belongs to the oligoribonuclease family.

The protein resides in the cytoplasm. Functionally, 3'-to-5' exoribonuclease specific for small oligoribonucleotides. In Acinetobacter baylyi (strain ATCC 33305 / BD413 / ADP1), this protein is Oligoribonuclease.